The chain runs to 481 residues: Glutamyl-tRNA(Gln) amidotransferase subunit A (481 aa).

Catalysis depends on charge relay system residues Lys76 and Ser151. Ser175 (acyl-ester intermediate) is an active-site residue.

It belongs to the amidase family. GatA subfamily. As to quaternary structure, heterotrimer of A, B and C subunits.

It carries out the reaction L-glutamyl-tRNA(Gln) + L-glutamine + ATP + H2O = L-glutaminyl-tRNA(Gln) + L-glutamate + ADP + phosphate + H(+). Allows the formation of correctly charged Gln-tRNA(Gln) through the transamidation of misacylated Glu-tRNA(Gln) in organisms which lack glutaminyl-tRNA synthetase. The reaction takes place in the presence of glutamine and ATP through an activated gamma-phospho-Glu-tRNA(Gln). This chain is Glutamyl-tRNA(Gln) amidotransferase subunit A, found in Neisseria meningitidis serogroup C (strain 053442).